The chain runs to 201 residues: Recombination protein RecR (201 aa).

A C4-type zinc finger spans residues C60 to C75. One can recognise a Toprim domain in the interval T83–P178.

Belongs to the RecR family.

May play a role in DNA repair. It seems to be involved in an RecBC-independent recombinational process of DNA repair. It may act with RecF and RecO. This is Recombination protein RecR from Methylorubrum extorquens (strain CM4 / NCIMB 13688) (Methylobacterium extorquens).